Reading from the N-terminus, the 846-residue chain is DNA mismatch repair protein MutS (846 aa).

Position 610-617 (610-617) interacts with ATP; sequence GPNMGGKS.

It belongs to the DNA mismatch repair MutS family.

Functionally, this protein is involved in the repair of mismatches in DNA. It is possible that it carries out the mismatch recognition step. This protein has a weak ATPase activity. The sequence is that of DNA mismatch repair protein MutS from Legionella pneumophila (strain Paris).